The primary structure comprises 147 residues: Small ribosomal subunit protein uS5 (147 aa).

In terms of domain architecture, S5 DRBM spans 9 to 72 (FEEVIVDIGR…DDAFKNIIHV (64 aa)).

Belongs to the universal ribosomal protein uS5 family. In terms of assembly, part of the 30S ribosomal subunit. Contacts proteins S4 and S8.

With S4 and S12 plays an important role in translational accuracy. In terms of biological role, located at the back of the 30S subunit body where it stabilizes the conformation of the head with respect to the body. The chain is Small ribosomal subunit protein uS5 from Campylobacter concisus (strain 13826).